The chain runs to 147 residues: Peptide methionine sulfoxide reductase MsrB (147 aa).

Positions 25–147 (DEYWREHLTE…NSVSLIFNKK (123 aa)) constitute a MsrB domain. Zn(2+)-binding residues include cysteine 64, cysteine 67, cysteine 113, and cysteine 116. The active-site Nucleophile is the cysteine 136.

Belongs to the MsrB Met sulfoxide reductase family. Zn(2+) is required as a cofactor.

It carries out the reaction L-methionyl-[protein] + [thioredoxin]-disulfide + H2O = L-methionyl-(R)-S-oxide-[protein] + [thioredoxin]-dithiol. The protein is Peptide methionine sulfoxide reductase MsrB of Vibrio cholerae serotype O1 (strain ATCC 39541 / Classical Ogawa 395 / O395).